We begin with the raw amino-acid sequence, 268 residues long: Xyloglucan endotransglucosylase protein 7 (268 aa).

Positions 1 to 196 constitute a GH16 domain; that stretch reads MNAEGGNLHR…WTKAPFTASY (196 aa). E82 serves as the catalytic Nucleophile. E86 (proton donor) is an active-site residue. E86 contacts xyloglucan. Residue N90 is glycosylated (N-linked (GlcNAc...) asparagine). Xyloglucan contacts are provided by residues 99 to 101, 109 to 111, 175 to 176, and G180; these read HTN, NRE, and DW. 2 disulfides stabilise this stretch: C204/C213 and C251/C265. R256 contributes to the xyloglucan binding site.

This sequence belongs to the glycosyl hydrolase 16 family. XTH group 2 subfamily. Post-translationally, contains at least one intrachain disulfide bond essential for its enzymatic activity. In terms of tissue distribution, expressed at a very high level in flowers and stems (picked at anthesis), and at a lower level in ripe leaves and fruits.

It is found in the cytoplasm. The enzyme catalyses breaks a beta-(1-&gt;4) bond in the backbone of a xyloglucan and transfers the xyloglucanyl segment on to O-4 of the non-reducing terminal glucose residue of an acceptor, which can be a xyloglucan or an oligosaccharide of xyloglucan.. Its function is as follows. Catalyzes xyloglucan endotransglycosylation (XET). Cleaves and religates xyloglucan polymers. Does not catalyze xyloglucan endohydrolysis (XEH). Probably involved in cell wall assembly and synthesis in fast growing tissues and in the maintenance of firmness in mature fruits. This chain is Xyloglucan endotransglucosylase protein 7, found in Diospyros kaki (Kaki persimmon).